Here is a 346-residue protein sequence, read N- to C-terminus: tRNA N6-adenosine threonylcarbamoyltransferase (346 aa).

Fe cation contacts are provided by histidine 109, histidine 113, and tyrosine 135. Substrate contacts are provided by residues 135 to 139, aspartate 167, glycine 180, glutamate 184, and asparagine 263; that span reads YVSGG. A Fe cation-binding site is contributed by aspartate 291.

The protein belongs to the KAE1 / TsaD family. As to quaternary structure, monomer. Component of the KEOPS complex that consists of Kae1, Bud32, Cgi121 and Pcc1; the whole complex dimerizes. Requires Fe(2+) as cofactor.

It localises to the cytoplasm. The enzyme catalyses L-threonylcarbamoyladenylate + adenosine(37) in tRNA = N(6)-L-threonylcarbamoyladenosine(37) in tRNA + AMP + H(+). Its function is as follows. Required for the formation of a threonylcarbamoyl group on adenosine at position 37 (t(6)A37) in tRNAs that read codons beginning with adenine. Is a component of the KEOPS complex that is probably involved in the transfer of the threonylcarbamoyl moiety of threonylcarbamoyl-AMP (TC-AMP) to the N6 group of A37. Kae1 likely plays a direct catalytic role in this reaction, but requires other protein(s) of the complex to fulfill this activity. The protein is tRNA N6-adenosine threonylcarbamoyltransferase of Methanopyrus kandleri (strain AV19 / DSM 6324 / JCM 9639 / NBRC 100938).